The chain runs to 341 residues: L-threonine 3-dehydrogenase (341 aa).

C38 is a binding site for Zn(2+). Residues T40 and H43 each act as charge relay system in the active site. Residues H63, E64, C93, C96, C99, and C107 each contribute to the Zn(2+) site. NAD(+)-binding positions include I175, D195, R200, 262 to 264 (LGI), and 286 to 287 (IY).

The protein belongs to the zinc-containing alcohol dehydrogenase family. In terms of assembly, homotetramer. Zn(2+) is required as a cofactor.

The protein localises to the cytoplasm. The catalysed reaction is L-threonine + NAD(+) = (2S)-2-amino-3-oxobutanoate + NADH + H(+). It participates in amino-acid degradation; L-threonine degradation via oxydo-reductase pathway; glycine from L-threonine: step 1/2. Its function is as follows. Catalyzes the NAD(+)-dependent oxidation of L-threonine to 2-amino-3-ketobutyrate. This Photorhabdus laumondii subsp. laumondii (strain DSM 15139 / CIP 105565 / TT01) (Photorhabdus luminescens subsp. laumondii) protein is L-threonine 3-dehydrogenase.